A 431-amino-acid chain; its full sequence is UDP-N-acetylglucosamine 1-carboxyvinyltransferase (431 aa).

Residue 24 to 25 (KN) participates in phosphoenolpyruvate binding. A UDP-N-acetyl-alpha-D-glucosamine-binding site is contributed by Arg-95. Asp-119 functions as the Proton donor in the catalytic mechanism. UDP-N-acetyl-alpha-D-glucosamine-binding residues include Asp-314 and Met-336.

This sequence belongs to the EPSP synthase family. MurA subfamily.

The protein resides in the cytoplasm. It carries out the reaction phosphoenolpyruvate + UDP-N-acetyl-alpha-D-glucosamine = UDP-N-acetyl-3-O-(1-carboxyvinyl)-alpha-D-glucosamine + phosphate. The protein operates within cell wall biogenesis; peptidoglycan biosynthesis. Its function is as follows. Cell wall formation. Adds enolpyruvyl to UDP-N-acetylglucosamine. The protein is UDP-N-acetylglucosamine 1-carboxyvinyltransferase of Bradyrhizobium diazoefficiens (strain JCM 10833 / BCRC 13528 / IAM 13628 / NBRC 14792 / USDA 110).